Consider the following 439-residue polypeptide: Adenylosuccinate synthetase (439 aa).

GTP is bound by residues 12–18 (GDEGKGK) and 40–42 (GHT). Catalysis depends on aspartate 13, which acts as the Proton acceptor. Aspartate 13 and glycine 40 together coordinate Mg(2+). Residues 13–16 (DEGK), 38–41 (NAGH), threonine 137, arginine 151, glutamine 232, threonine 247, and arginine 311 contribute to the IMP site. The active-site Proton donor is histidine 41. Residue 307 to 313 (ATTGRPR) participates in substrate binding. Residues arginine 313, 339 to 341 (KLD), and 421 to 423 (SNG) each bind GTP.

Belongs to the adenylosuccinate synthetase family. In terms of assembly, homodimer. It depends on Mg(2+) as a cofactor.

The protein localises to the cytoplasm. It catalyses the reaction IMP + L-aspartate + GTP = N(6)-(1,2-dicarboxyethyl)-AMP + GDP + phosphate + 2 H(+). It functions in the pathway purine metabolism; AMP biosynthesis via de novo pathway; AMP from IMP: step 1/2. Plays an important role in the de novo pathway of purine nucleotide biosynthesis. Catalyzes the first committed step in the biosynthesis of AMP from IMP. This chain is Adenylosuccinate synthetase, found in Salinibacter ruber (strain DSM 13855 / M31).